We begin with the raw amino-acid sequence, 593 residues long: Prospero homeobox protein 2 (593 aa).

6 disordered regions span residues 24–48, 79–130, 153–199, 260–284, 298–333, and 356–388; these read CMDQERSPATAEAGRDSFPSGQLPS, SPSS…GGTR, TEPR…KDLC, QERSCQGLASEGRNQPSPPGRSAYK, PQAGVPLGNSTLARPLDSPMCPVSPRGVPRSYQSPL, and GRGPDGQWSGSPPQDAAFQSHTSPESAQQPWGL. Residues 87–99 are compositionally biased toward basic and acidic residues; the sequence is RARESLRCPEKGR. The segment covering 167–181 has biased composition (low complexity); the sequence is PRSSPRARPRNSCSS. The span at 363-380 shows a compositional bias: polar residues; that stretch reads WSGSPPQDAAFQSHTSPE. The region spanning 433–491 is the Prospero-type homeo domain; it reads QEGLSPGHLKKAKLMFFFTRYPSSSLLKAYFPDVQFNRCITSQMIKWFSNFREFYYIQM. Residues 433–591 are homeo-Prospero; sequence QEGLSPGHLK…KSPSFLPGLF (159 aa). The Prospero domain occupies 492–591; sequence EKYARQALSD…KSPSFLPGLF (100 aa).

Belongs to the Prospero homeodomain family. Expressed in testis.

It localises to the nucleus. Transcription regulator. Does not seem to be essential for embryonic development and postnatal survival. The polypeptide is Prospero homeobox protein 2 (Prox2) (Mus musculus (Mouse)).